The following is a 123-amino-acid chain: Small ribosomal subunit protein uS12 (123 aa).

The tract at residues 1 to 45 (MPTINQLIRKKRQSGATRKKSPALQKSPQKRGVCLQVKTKTPKKP) is disordered. Residues 8–21 (IRKKRQSGATRKKS) show a composition bias toward basic residues.

Belongs to the universal ribosomal protein uS12 family. In terms of assembly, part of the 30S ribosomal subunit. Contacts proteins S8 and S17. May interact with IF1 in the 30S initiation complex.

Functionally, with S4 and S5 plays an important role in translational accuracy. In terms of biological role, interacts with and stabilizes bases of the 16S rRNA that are involved in tRNA selection in the A site and with the mRNA backbone. Located at the interface of the 30S and 50S subunits, it traverses the body of the 30S subunit contacting proteins on the other side and probably holding the rRNA structure together. The combined cluster of proteins S8, S12 and S17 appears to hold together the shoulder and platform of the 30S subunit. This chain is Small ribosomal subunit protein uS12, found in Chlamydia muridarum (strain MoPn / Nigg).